The primary structure comprises 568 residues: Sphingosine-1-phosphate lyase 1 (568 aa).

Topologically, residues 1 to 40 (MPSTDLLMLKAFEPYLEILEVYSTKAKNYVNGHCTKYEPW) are lumenal. The chain crosses the membrane as a helical; Signal-anchor for type III membrane protein span at residues 41–61 (QLIAWSVVWTLLIVWGYEFVF). Residues 62–568 (QPESLWSRFK…SQMNGSPKPH (507 aa)) lie on the Cytoplasmic side of the membrane. Residue K353 is modified to N6-(pyridoxal phosphate)lysine; alternate. K353 is subject to N6-acetyllysine; alternate. Residues Y356 and Y366 each carry the 3'-nitrotyrosine modification. S564 carries the post-translational modification Phosphoserine.

The protein belongs to the group II decarboxylase family. Sphingosine-1-phosphate lyase subfamily. In terms of assembly, homodimer. Pyridoxal 5'-phosphate serves as cofactor. Ubiquitously expressed. Expressed in fetal and adult adrenal gland (at protein level).

The protein localises to the endoplasmic reticulum membrane. It catalyses the reaction sphinganine 1-phosphate = hexadecanal + phosphoethanolamine. The enzyme catalyses sphing-4-enine 1-phosphate = (2E)-hexadecenal + phosphoethanolamine. Its pathway is lipid metabolism; sphingolipid metabolism. In terms of biological role, cleaves phosphorylated sphingoid bases (PSBs), such as sphingosine-1-phosphate, into fatty aldehydes and phosphoethanolamine. Elevates stress-induced ceramide production and apoptosis. Required for global lipid homeostasis in liver and cholesterol homeostasis in fibroblasts. Involved in the regulation of pro-inflammatory response and neutrophil trafficking. Modulates neuronal autophagy via phosphoethanolamine production which regulates accumulation of aggregate-prone proteins such as APP. Seems to play a role in establishing neuronal contact sites and axonal maintenance. This chain is Sphingosine-1-phosphate lyase 1, found in Homo sapiens (Human).